A 405-amino-acid polypeptide reads, in one-letter code: Formin-like protein 15a (405 aa).

Positions 1–31 (MSLVEISGSDAMAAPMPGRVPPPPPRPPPMP) are disordered. Residues 18-31 (GRVPPPPPRPPPMP) are compositionally biased toward pro residues. Residues 52 to 405 (FPRPAKKRAS…VCWFFVRLMI (354 aa)) form the FH2 domain.

It belongs to the formin-like family. Class-II subfamily.

The chain is Formin-like protein 15a (FH15A) from Arabidopsis thaliana (Mouse-ear cress).